A 536-amino-acid polypeptide reads, in one-letter code: Formate--tetrahydrofolate ligase (536 aa).

An ATP-binding site is contributed by 51–58 (TAAGEGKT).

Belongs to the formate--tetrahydrofolate ligase family.

The enzyme catalyses (6S)-5,6,7,8-tetrahydrofolate + formate + ATP = (6R)-10-formyltetrahydrofolate + ADP + phosphate. The protein operates within one-carbon metabolism; tetrahydrofolate interconversion. This chain is Formate--tetrahydrofolate ligase, found in Thermoplasma volcanium (strain ATCC 51530 / DSM 4299 / JCM 9571 / NBRC 15438 / GSS1).